The following is a 426-amino-acid chain: Tyrosine--tRNA ligase (426 aa).

Tyr-37 is a binding site for L-tyrosine. The short motif at 42–51 is the 'HIGH' region element; sequence PTADSLHLGH. Residues Tyr-175 and Gln-179 each coordinate L-tyrosine. Positions 235-239 match the 'KMSKS' region motif; that stretch reads KFGKT. Lys-238 contributes to the ATP binding site. Positions 357-415 constitute an S4 RNA-binding domain; that stretch reads TDLMQALVESELQPSRGQARKAIAANGVTVNGIKQPDPDYVLNENDRYFSNYTLLRRGK.

Belongs to the class-I aminoacyl-tRNA synthetase family. TyrS type 1 subfamily. As to quaternary structure, homodimer.

The protein localises to the cytoplasm. It carries out the reaction tRNA(Tyr) + L-tyrosine + ATP = L-tyrosyl-tRNA(Tyr) + AMP + diphosphate + H(+). Functionally, catalyzes the attachment of tyrosine to tRNA(Tyr) in a two-step reaction: tyrosine is first activated by ATP to form Tyr-AMP and then transferred to the acceptor end of tRNA(Tyr). This chain is Tyrosine--tRNA ligase, found in Klebsiella pneumoniae (strain 342).